Here is a 27-residue protein sequence, read N- to C-terminus: Caerulein precursor fragment R5 (27 aa).

As to expression, expressed by the skin glands.

The protein localises to the secreted. Antimicrobial peptide. In Xenopus ruwenzoriensis (Uganda clawed frog), this protein is Caerulein precursor fragment R5.